The chain runs to 283 residues: MTVLSTDIPAPNSPSISDVEAYYDAMGPFYKLIWGDSVHGGYWPAGLEDMSLPEAQEHLTNLMIEKTPIKPGQHMLDLGCGTGLPAIRMASAKQCHVHGLTVAHGQVAEAQATIQAMQMQELVHINWGNAMELPFEADFFNAAWAFESIFHMPSRLTVLQEANRVLQAGSYFVLTDIVEVKSLSPEQQQIFFPAFQINTLTTKQGYLDLFAQTGFEQLELIDLTAGIEKTLAHTKLGIEQKRAELAAIYPPEMLGMIEQTWPMVEKIYAEFVRYVLIVARKRG.

Residues glutamine 106, 129 to 130 (NA), and histidine 151 contribute to the S-adenosyl-L-methionine site.

Belongs to the methyltransferase superfamily.

It catalyses the reaction (+)-kolavelool + S-adenosyl-L-methionine = (+)-O-methylkolavelool + S-adenosyl-L-homocysteine + H(+). Its function is as follows. Involved in the biosynthesis of the diterpene (+)-O-methylkolavelool. Catalyzes the transfer of a methyl group from S-adenosyl-L-methionine to the hydroxy group of (+)-kolavelool, forming (+)-O-methylkolavelool. This is (+)-O-methylkolavelool synthase from Herpetosiphon aurantiacus (strain ATCC 23779 / DSM 785 / 114-95).